Here is a 128-residue protein sequence, read N- to C-terminus: Kinetoplast-associated protein 4 (128 aa).

Positions 1-10 (MLRFVPRRLA) are excised as a propeptide. Residues 60–87 (AHPGFKRKEKEPKELKAAKAAKTSTPRA) are disordered. Basic and acidic residues predominate over residues 65 to 76 (KRKEKEPKELKA).

Belongs to the KAP family. As to quaternary structure, associates with the kinetoplast DNA network.

It is found in the mitochondrion matrix. Its subcellular location is the kinetoplast. In terms of biological role, histone H1-like DNA-binding protein involved in the organization and segregation of kinetoplast DNA (kDNA). The mitochondrial DNA of kinetoplastid protozoa consists of about 5,000 minicircles and 20 to 30 maxicircles. These circular DNAs are held together by catenation into a highly organized compact disk structure referred to as a kinetoplast DNA (kDNA) network. Binds preferentially to a specific fragment of minicircle DNA and is able to compact kDNA networks through DNA charge neutralization and condensation. The sequence is that of Kinetoplast-associated protein 4 (KAP4) from Crithidia fasciculata.